The following is a 160-amino-acid chain: Phosphopantetheine adenylyltransferase (160 aa).

T9 serves as a coordination point for substrate. Residues 9–10 (TF) and H17 each bind ATP. Substrate is bound by residues K41, L73, and R87. Residues 88–90 (GLR), E98, and 123–129 (YSFLSSS) each bind ATP.

The protein belongs to the bacterial CoaD family. In terms of assembly, homohexamer. Mg(2+) serves as cofactor.

It localises to the cytoplasm. The catalysed reaction is (R)-4'-phosphopantetheine + ATP + H(+) = 3'-dephospho-CoA + diphosphate. It participates in cofactor biosynthesis; coenzyme A biosynthesis; CoA from (R)-pantothenate: step 4/5. Its function is as follows. Reversibly transfers an adenylyl group from ATP to 4'-phosphopantetheine, yielding dephospho-CoA (dPCoA) and pyrophosphate. In Moorella thermoacetica (strain ATCC 39073 / JCM 9320), this protein is Phosphopantetheine adenylyltransferase.